We begin with the raw amino-acid sequence, 178 residues long: Crossover junction endodeoxyribonuclease RuvC (178 aa).

Active-site residues include aspartate 8, glutamate 72, and aspartate 144. Residues aspartate 8, glutamate 72, and aspartate 144 each coordinate Mg(2+).

This sequence belongs to the RuvC family. Homodimer which binds Holliday junction (HJ) DNA. The HJ becomes 2-fold symmetrical on binding to RuvC with unstacked arms; it has a different conformation from HJ DNA in complex with RuvA. In the full resolvosome a probable DNA-RuvA(4)-RuvB(12)-RuvC(2) complex forms which resolves the HJ. Mg(2+) is required as a cofactor.

The protein localises to the cytoplasm. The enzyme catalyses Endonucleolytic cleavage at a junction such as a reciprocal single-stranded crossover between two homologous DNA duplexes (Holliday junction).. In terms of biological role, the RuvA-RuvB-RuvC complex processes Holliday junction (HJ) DNA during genetic recombination and DNA repair. Endonuclease that resolves HJ intermediates. Cleaves cruciform DNA by making single-stranded nicks across the HJ at symmetrical positions within the homologous arms, yielding a 5'-phosphate and a 3'-hydroxyl group; requires a central core of homology in the junction. The consensus cleavage sequence is 5'-(A/T)TT(C/G)-3'. Cleavage occurs on the 3'-side of the TT dinucleotide at the point of strand exchange. HJ branch migration catalyzed by RuvA-RuvB allows RuvC to scan DNA until it finds its consensus sequence, where it cleaves and resolves the cruciform DNA. This is Crossover junction endodeoxyribonuclease RuvC from Idiomarina loihiensis (strain ATCC BAA-735 / DSM 15497 / L2-TR).